A 463-amino-acid polypeptide reads, in one-letter code: Phosphomannomutase (463 aa).

The active-site Phosphoserine intermediate is S103. Mg(2+) contacts are provided by S103, D248, D250, and D252.

It belongs to the phosphohexose mutase family. The cofactor is Mg(2+).

It localises to the cell membrane. The catalysed reaction is alpha-D-mannose 1-phosphate = D-mannose 6-phosphate. It participates in nucleotide-sugar biosynthesis; GDP-alpha-D-mannose biosynthesis; alpha-D-mannose 1-phosphate from D-fructose 6-phosphate: step 2/2. It functions in the pathway bacterial outer membrane biogenesis; LPS O-antigen biosynthesis. In terms of biological role, involved in GDP-mannose biosynthesis which serves as the activated sugar nucleotide precursor for mannose residues in cell surface polysaccharides. The sequence is that of Phosphomannomutase (rfbB) from Vibrio cholerae serotype O1 (strain ATCC 39315 / El Tor Inaba N16961).